A 106-amino-acid polypeptide reads, in one-letter code: Defensin-like protein 1 (106 aa).

The signal sequence occupies residues 1–25 (MARSLCFMAFAVLAMMLFVAYEVQA). Disulfide bonds link Cys-29-Cys-73, Cys-40-Cys-60, Cys-46-Cys-67, and Cys-50-Cys-69.

It belongs to the DEFL family.

The protein localises to the secreted. It is found in the vacuole. This Nicotiana paniculata protein is Defensin-like protein 1 (THIO1).